The following is a 417-amino-acid chain: Serine hydroxymethyltransferase (417 aa).

(6S)-5,6,7,8-tetrahydrofolate is bound by residues Leu121 and 125 to 127; that span reads GHL. The residue at position 229 (Lys229) is an N6-(pyridoxal phosphate)lysine. 354 to 356 lines the (6S)-5,6,7,8-tetrahydrofolate pocket; that stretch reads SPF.

This sequence belongs to the SHMT family. Homodimer. Requires pyridoxal 5'-phosphate as cofactor.

The protein resides in the cytoplasm. It catalyses the reaction (6R)-5,10-methylene-5,6,7,8-tetrahydrofolate + glycine + H2O = (6S)-5,6,7,8-tetrahydrofolate + L-serine. It participates in one-carbon metabolism; tetrahydrofolate interconversion. Its pathway is amino-acid biosynthesis; glycine biosynthesis; glycine from L-serine: step 1/1. Catalyzes the reversible interconversion of serine and glycine with tetrahydrofolate (THF) serving as the one-carbon carrier. This reaction serves as the major source of one-carbon groups required for the biosynthesis of purines, thymidylate, methionine, and other important biomolecules. Also exhibits THF-independent aldolase activity toward beta-hydroxyamino acids, producing glycine and aldehydes, via a retro-aldol mechanism. In Dichelobacter nodosus (strain VCS1703A), this protein is Serine hydroxymethyltransferase.